The sequence spans 211 residues: Thymidylate kinase (211 aa).

Residue 10 to 17 coordinates ATP; that stretch reads GVEGCGKT.

Belongs to the thymidylate kinase family.

The enzyme catalyses dTMP + ATP = dTDP + ADP. In terms of biological role, phosphorylation of dTMP to form dTDP in both de novo and salvage pathways of dTTP synthesis. This Trichormus variabilis (strain ATCC 29413 / PCC 7937) (Anabaena variabilis) protein is Thymidylate kinase.